A 105-amino-acid chain; its full sequence is Large ribosomal subunit protein eL30 (105 aa).

It belongs to the eukaryotic ribosomal protein eL30 family.

In Candida glabrata (strain ATCC 2001 / BCRC 20586 / JCM 3761 / NBRC 0622 / NRRL Y-65 / CBS 138) (Yeast), this protein is Large ribosomal subunit protein eL30 (RPL30).